The chain runs to 669 residues: Dymeclin (669 aa).

A lipid anchor (N-myristoyl glycine) is attached at Gly2.

It belongs to the dymeclin family. Interacts with GOLM1 and PPIB. Post-translationally, myristoylated in vitro; myristoylation is not essential for protein targeting to Golgi compartment.

It is found in the cytoplasm. The protein resides in the golgi apparatus. The protein localises to the membrane. Necessary for correct organization of Golgi apparatus. Involved in bone development. This is Dymeclin (Dym) from Mus musculus (Mouse).